Here is a 379-residue protein sequence, read N- to C-terminus: L-demethylnoviosyl transferase (379 aa).

This sequence belongs to the glycosyltransferase 28 family.

It carries out the reaction dTDP-4-O-demethyl-beta-L-noviose + novobiocic acid = desmethyldescarbamoylnovobiocin + dTDP + H(+). Its pathway is antibiotic biosynthesis; novobiocin biosynthesis. Its activity is regulated as follows. Inhibited by TDP-L-rhamnose, the sugar donor that most closely structurally resembles the natural substrate dTDP-beta-L-noviose. Catalyzes the transfer of L-noviose from dTDP-4-O-demethyl-beta-L-noviose to the phenolic oxygen of novobiocic acid, creating the full ABC ring system in the novobiocin biosynthesis pathway. Novobiocin is an aminocoumarin family antibiotic that targets bacterial DNA gyrases. Also shows activity with variant coumarin aglycones, suggesting it may be a promiscuous catalyst for noviosylation of a range of planar scaffolds. Does not show activity with TDP-L-rhamnose. This is L-demethylnoviosyl transferase (novM) from Streptomyces niveus (Streptomyces spheroides).